A 164-amino-acid polypeptide reads, in one-letter code: MIFLDNRQDKIEVTDKLEKIVTSSIECALKEEKVNFPCEISVVFVDNENIKDINRENRNIDRVTDVLSFPMLEYPESKVFKEVYLNYKFPEYDMNDGNLVLGDIVVSLEKCEEQSREFGHSFFRETCYLIVHSVLHLLGYDHTEDSDKKIMREREEYILKKAKL.

Positions 132, 136, and 142 each coordinate Zn(2+).

The protein belongs to the endoribonuclease YbeY family. It depends on Zn(2+) as a cofactor.

Its subcellular location is the cytoplasm. Single strand-specific metallo-endoribonuclease involved in late-stage 70S ribosome quality control and in maturation of the 3' terminus of the 16S rRNA. In Clostridium kluyveri (strain NBRC 12016), this protein is Endoribonuclease YbeY.